Consider the following 144-residue polypeptide: Large ribosomal subunit protein uL15 (144 aa).

The disordered stretch occupies residues 1–44; it reads MNLNELQPAAGSRHVRNRVGRGTSSGNGKTSGRGQKGQKARGKV. The segment covering 23–35 has biased composition (gly residues); that stretch reads TSSGNGKTSGRGQ.

This sequence belongs to the universal ribosomal protein uL15 family. In terms of assembly, part of the 50S ribosomal subunit.

Functionally, binds to the 23S rRNA. In Leuconostoc mesenteroides subsp. mesenteroides (strain ATCC 8293 / DSM 20343 / BCRC 11652 / CCM 1803 / JCM 6124 / NCDO 523 / NBRC 100496 / NCIMB 8023 / NCTC 12954 / NRRL B-1118 / 37Y), this protein is Large ribosomal subunit protein uL15.